A 901-amino-acid polypeptide reads, in one-letter code: Core protein VP3 (901 aa).

This sequence belongs to the orbivirus VP3 family.

It localises to the virion. In terms of biological role, the VP3 protein is one of the five proteins (with VP1, VP4, VP6 and VP7) which form the inner capsid of the virus. The protein is Core protein VP3 (Segment-3) of Bluetongue virus 1 (isolate South Africa) (BTV 1).